We begin with the raw amino-acid sequence, 162 residues long: RNA pyrophosphohydrolase (162 aa).

Residues P11–A155 enclose the Nudix hydrolase domain. The Nudix box signature appears at G45–G66.

It belongs to the Nudix hydrolase family. RppH subfamily. The cofactor is a divalent metal cation.

Functionally, accelerates the degradation of transcripts by removing pyrophosphate from the 5'-end of triphosphorylated RNA, leading to a more labile monophosphorylated state that can stimulate subsequent ribonuclease cleavage. The polypeptide is RNA pyrophosphohydrolase (Cereibacter sphaeroides (strain ATCC 17023 / DSM 158 / JCM 6121 / CCUG 31486 / LMG 2827 / NBRC 12203 / NCIMB 8253 / ATH 2.4.1.) (Rhodobacter sphaeroides)).